The chain runs to 370 residues: Putative F-box protein At3g10430 (370 aa).

The F-box domain maps to 1–47 (MGSSLPFDLILEILQRTPAESLLRFKSTCKKWYELISNDKRFMYKHL).

The chain is Putative F-box protein At3g10430 from Arabidopsis thaliana (Mouse-ear cress).